Reading from the N-terminus, the 33-residue chain is Ice-structuring protein SS-3 (33 aa).

This sequence belongs to the type-I AFP family.

In terms of biological role, antifreeze proteins lower the blood freezing point. This Myoxocephalus scorpius (Shorthorn sculpin) protein is Ice-structuring protein SS-3.